A 666-amino-acid polypeptide reads, in one-letter code: Protein-arginine deiminase type-4 (666 aa).

Asn153, Asp155, Asp165, Asp168, Asp176, and Asp179 together coordinate Ca(2+). Arg212 and Arg218 each carry citrulline. Gln349 is a Ca(2+) binding site. Residue Asp350 is part of the active site. Residues Glu351, Glu353, Asp369, and Ser370 each coordinate Ca(2+). Citrulline is present on residues Arg372, Arg374, and Arg383. Substrate is bound at residue Arg374. Residues Phe407, Leu410, and Glu411 each contribute to the Ca(2+) site. Active-site residues include His471, Asp473, and Cys648.

This sequence belongs to the protein arginine deiminase family. The cofactor is Ca(2+). Autocitrullination at Arg-372 and Arg-374 inactivates the enzyme. Epidermis.

It localises to the cytoplasm. The protein localises to the nucleus. It is found in the cytoplasmic granule. The catalysed reaction is L-arginyl-[protein] + H2O = L-citrullyl-[protein] + NH4(+). Catalyzes the citrullination/deimination of arginine residues of proteins such as histones, thereby playing a key role in histone code and regulation of stem cell maintenance. Citrullinates histone H1 at 'Arg-54' (to form H1R54ci), histone H3 at 'Arg-2', 'Arg-8', 'Arg-17' and/or 'Arg-26' (to form H3R2ci, H3R8ci, H3R17ci, H3R26ci, respectively) and histone H4 at 'Arg-3' (to form H4R3ci). Acts as a key regulator of stem cell maintenance by mediating citrullination of histone H1: citrullination of 'Arg-54' of histone H1 (H1R54ci) results in H1 displacement from chromatin and global chromatin decondensation, thereby promoting pluripotency and stem cell maintenance. Promotes profound chromatin decondensation during the innate immune response to infection in neutrophils by mediating formation of H1R54ci. Required for the formation of neutrophil extracellular traps (NETs); NETs are mainly composed of DNA fibers and are released by neutrophils to bind pathogens during inflammation. Citrullination of histone H3 prevents their methylation by CARM1 and HRMT1L2/PRMT1 and represses transcription. Citrullinates EP300/P300 at 'Arg-2142', which favors its interaction with NCOA2/GRIP1. This is Protein-arginine deiminase type-4 (Padi4) from Rattus norvegicus (Rat).